Reading from the N-terminus, the 156-residue chain is Snaclec A6 (156 aa).

The first 23 residues, 1-23 (MGRSISVSFGLLVVFLSLSGTGA), serve as a signal peptide directing secretion. Cystine bridges form between Cys-27–Cys-38, Cys-55–Cys-154, and Cys-129–Cys-146. The 122-residue stretch at 34–155 (HEGHCYKVFN…CGKPYRFTCE (122 aa)) folds into the C-type lectin domain.

The protein belongs to the snaclec family. Heterodimer; disulfide-linked. Expressed by the venom gland.

It localises to the secreted. Its function is as follows. Interferes with one step of hemostasis (modulation of platelet aggregation, or coagulation cascade, for example). This Macrovipera lebetinus (Levantine viper) protein is Snaclec A6.